Here is a 381-residue protein sequence, read N- to C-terminus: Estradiol 17-beta-dehydrogenase 2 (381 aa).

The helical; Signal-anchor for type II membrane protein transmembrane segment at 4–24 (FSSESAWLCLTATAVLGGMLL) threads the bilayer. 83 to 112 (QKAVLVTGADSGFGHALAKHLDKLGFTVFA) lines the NAD(+) pocket. A substrate-binding site is contributed by S220. Residue Y233 is the Proton acceptor of the active site.

This sequence belongs to the short-chain dehydrogenases/reductases (SDR) family. Homodimer. Highly expressed in the placenta, and in the small intestine, and liver.

The protein resides in the endoplasmic reticulum membrane. The enzyme catalyses 17beta-estradiol + NAD(+) = estrone + NADH + H(+). It carries out the reaction testosterone + NAD(+) = androst-4-ene-3,17-dione + NADH + H(+). The catalysed reaction is 17beta-hydroxy-5alpha-androstan-3-one + NAD(+) = 5alpha-androstan-3,17-dione + NADH + H(+). It catalyses the reaction (20S)-hydroxypregn-4-en-3-one + NAD(+) = progesterone + NADH + H(+). Catalyzes the NAD-dependent oxidation of highly active 17beta-hydroxysteroids, such as estradiol (E2), testosterone (T), and dihydrotestosterone (DHT), to their less active forms and thus regulates the biological potency of these steroids. Oxidizes estradiol to estrone, testosterone to androstenedione, and dihydrotestosterone to 5alpha-androstan-3,17-dione. Also has 20-alpha-HSD activity. In Rattus norvegicus (Rat), this protein is Estradiol 17-beta-dehydrogenase 2 (Hsd17b2).